A 177-amino-acid polypeptide reads, in one-letter code: Ribosome maturation factor RimM (177 aa).

Positions 98 to 171 constitute a PRC barrel domain; the sequence is GETIFLSEIK…AVVMDLPEGL (74 aa).

It belongs to the RimM family. In terms of assembly, binds ribosomal protein uS19.

It localises to the cytoplasm. In terms of biological role, an accessory protein needed during the final step in the assembly of 30S ribosomal subunit, possibly for assembly of the head region. Essential for efficient processing of 16S rRNA. May be needed both before and after RbfA during the maturation of 16S rRNA. It has affinity for free ribosomal 30S subunits but not for 70S ribosomes. The sequence is that of Ribosome maturation factor RimM from Bdellovibrio bacteriovorus (strain ATCC 15356 / DSM 50701 / NCIMB 9529 / HD100).